Here is a 594-residue protein sequence, read N- to C-terminus: Membrane protein insertase YidC (594 aa).

The helical transmembrane segment at 7–27 (YFVAIALSVLILIAWQFFYVS) threads the bilayer. Residues 36 to 73 (AAEQAQQAQQTQQQPGAQPAAPGQALPGGAIPSAGESR) are disordered. The span at 37–65 (AEQAQQAQQTQQQPGAQPAAPGQALPGGA) shows a compositional bias: low complexity. A run of 4 helical transmembrane segments spans residues 369–389 (LFGN…LIFF), 443–463 (WPIL…YVTI), 488–508 (LFGL…WPII), and 532–552 (FTWM…GLVI).

It belongs to the OXA1/ALB3/YidC family. Type 1 subfamily. Interacts with the Sec translocase complex via SecD. Specifically interacts with transmembrane segments of nascent integral membrane proteins during membrane integration.

Its subcellular location is the cell inner membrane. Functionally, required for the insertion and/or proper folding and/or complex formation of integral membrane proteins into the membrane. Involved in integration of membrane proteins that insert both dependently and independently of the Sec translocase complex, as well as at least some lipoproteins. Aids folding of multispanning membrane proteins. In Rhizobium meliloti (strain 1021) (Ensifer meliloti), this protein is Membrane protein insertase YidC.